A 363-amino-acid polypeptide reads, in one-letter code: uncharacterized protein (363 aa).

This is an uncharacterized protein from Saccharomyces cerevisiae (strain ATCC 204508 / S288c) (Baker's yeast).